Reading from the N-terminus, the 447-residue chain is Probable glycine dehydrogenase (decarboxylating) subunit 1 (447 aa).

Belongs to the GcvP family. N-terminal subunit subfamily. As to quaternary structure, the glycine cleavage system is composed of four proteins: P, T, L and H. In this organism, the P 'protein' is a heterodimer of two subunits.

It catalyses the reaction N(6)-[(R)-lipoyl]-L-lysyl-[glycine-cleavage complex H protein] + glycine + H(+) = N(6)-[(R)-S(8)-aminomethyldihydrolipoyl]-L-lysyl-[glycine-cleavage complex H protein] + CO2. In terms of biological role, the glycine cleavage system catalyzes the degradation of glycine. The P protein binds the alpha-amino group of glycine through its pyridoxal phosphate cofactor; CO(2) is released and the remaining methylamine moiety is then transferred to the lipoamide cofactor of the H protein. This Macrococcus caseolyticus (strain JCSC5402) (Macrococcoides caseolyticum) protein is Probable glycine dehydrogenase (decarboxylating) subunit 1.